The chain runs to 92 residues: Bombyxin A-7 (92 aa).

The first 19 residues, 1–19 (MKLLLAIALMLTIVMWVST), serve as a signal peptide directing secretion. Q20 carries the post-translational modification Pyrrolidone carboxylic acid. 3 cysteine pairs are disulfide-bonded: C29-C79, C41-C92, and C78-C83. The propeptide at 50 to 70 (SDAQYASYGSAWLMPYSEGRG) is c peptide like.

It belongs to the insulin family. As to quaternary structure, heterodimer of a B chain and an A chain linked by two disulfide bonds.

It localises to the secreted. Brain peptide responsible for activation of prothoracic glands to produce ecdysone in insects. The sequence is that of Bombyxin A-7 (BBXA7) from Bombyx mori (Silk moth).